The chain runs to 530 residues: Copine-B (530 aa).

2 consecutive C2 domains span residues 1-125 (MTTP…SEIK) and 130-253 (ETGV…PLIN). The Ca(2+) site is built by Asp-25, Asp-31, Asp-85, Asp-87, and Asp-100. Residues 294 to 513 (NLMVAIDCTA…ETLREIPQQL (220 aa)) form the VWFA domain.

It belongs to the copine family. Ca(2+) serves as cofactor.

The polypeptide is Copine-B (cpnB-1) (Dictyostelium discoideum (Social amoeba)).